A 938-amino-acid chain; its full sequence is Protocadherin gamma-C4 (938 aa).

The first 29 residues, 1–29 (MLRKVRSWTEIWRWATLLFLFYHLGYVCG), serve as a signal peptide directing secretion. Cadherin domains follow at residues 30-133 (QIRY…APRF), 134-242 (PRQQ…APAF), 243-350 (QQSS…APYI), 351-455 (TVTS…PPSF), 456-565 (FQRS…APAV), and 572-676 (PGSL…VPDL). The Extracellular portion of the chain corresponds to 30–692 (QIRYPVPEES…REGESRLTLY (663 aa)). N-linked (GlcNAc...) asparagine glycosylation is found at Asn-265, Asn-276, and Asn-444. The helical transmembrane segment at 693–713 (LAVSLVAICFVSFGSFVALLS) threads the bilayer. Residues 714–938 (KCLRGAACGV…KKKSGKKEKK (225 aa)) are Cytoplasmic-facing. Disordered regions lie at residues 791–847 (PSAP…WPNN) and 908–938 (ATLT…KEKK). Residues 822 to 847 (WRFSQAQRPGTSGSQNGDDTGTWPNN) show a composition bias toward polar residues. Over residues 928–938 (NKKKSGKKEKK) the composition is skewed to basic residues.

It is found in the cell membrane. Functionally, potential calcium-dependent cell-adhesion protein. May be involved in the establishment and maintenance of specific neuronal connections in the brain. This chain is Protocadherin gamma-C4 (PCDHGC4), found in Homo sapiens (Human).